Consider the following 650-residue polypeptide: Acetyl-coenzyme A synthetase (650 aa).

CoA is bound by residues 191–194 (RGGR), T311, and N335. Residues 387-389 (GEP), 411-416 (DTWWQT), D500, and R515 contribute to the ATP site. S523 lines the CoA pocket. Position 526 (R526) interacts with ATP. Residues V537, H539, and V542 each contribute to the Mg(2+) site. R584 provides a ligand contact to CoA. K609 carries the N6-acetyllysine modification.

This sequence belongs to the ATP-dependent AMP-binding enzyme family. The cofactor is Mg(2+). Post-translationally, acetylated. Deacetylation by the SIR2-homolog deacetylase activates the enzyme.

The catalysed reaction is acetate + ATP + CoA = acetyl-CoA + AMP + diphosphate. Its function is as follows. Catalyzes the conversion of acetate into acetyl-CoA (AcCoA), an essential intermediate at the junction of anabolic and catabolic pathways. AcsA undergoes a two-step reaction. In the first half reaction, AcsA combines acetate with ATP to form acetyl-adenylate (AcAMP) intermediate. In the second half reaction, it can then transfer the acetyl group from AcAMP to the sulfhydryl group of CoA, forming the product AcCoA. The protein is Acetyl-coenzyme A synthetase of Shewanella amazonensis (strain ATCC BAA-1098 / SB2B).